The chain runs to 495 residues: UDP-N-acetylmuramoyl-L-alanyl-D-glutamate--2,6-diaminopimelate ligase (495 aa).

Residues Leu-27, Ser-29, and 44 to 46 (HQT) each bind UDP-N-acetyl-alpha-D-muramoyl-L-alanyl-D-glutamate. Residue 116 to 122 (GTNGKTT) participates in ATP binding. UDP-N-acetyl-alpha-D-muramoyl-L-alanyl-D-glutamate is bound by residues Asn-157, 158 to 159 (TT), Ser-185, Gln-191, and Arg-193. Lys-225 bears the N6-carboxylysine mark. Residues Arg-390, 414–417 (DNPR), Gly-465, and Glu-469 contribute to the meso-2,6-diaminopimelate site. Positions 414-417 (DNPR) match the Meso-diaminopimelate recognition motif motif.

This sequence belongs to the MurCDEF family. MurE subfamily. Mg(2+) serves as cofactor. Carboxylation is probably crucial for Mg(2+) binding and, consequently, for the gamma-phosphate positioning of ATP.

It localises to the cytoplasm. The enzyme catalyses UDP-N-acetyl-alpha-D-muramoyl-L-alanyl-D-glutamate + meso-2,6-diaminopimelate + ATP = UDP-N-acetyl-alpha-D-muramoyl-L-alanyl-gamma-D-glutamyl-meso-2,6-diaminopimelate + ADP + phosphate + H(+). It participates in cell wall biogenesis; peptidoglycan biosynthesis. Functionally, catalyzes the addition of meso-diaminopimelic acid to the nucleotide precursor UDP-N-acetylmuramoyl-L-alanyl-D-glutamate (UMAG) in the biosynthesis of bacterial cell-wall peptidoglycan. This is UDP-N-acetylmuramoyl-L-alanyl-D-glutamate--2,6-diaminopimelate ligase from Sodalis glossinidius (strain morsitans).